The primary structure comprises 313 residues: D-alanine--D-alanine ligase (313 aa).

An ATP-grasp domain is found at 111-306 (KQVWHSLGLP…FQQLVLAILA (196 aa)). Position 137 to 192 (137 to 192 (AAELGFPLIVKPAHEGSSIGMAKVESVEALIAAWQDAARYDSQVLVEQWIAGPEYT)) interacts with ATP. Positions 260, 273, and 275 each coordinate Mg(2+).

The protein belongs to the D-alanine--D-alanine ligase family. It depends on Mg(2+) as a cofactor. Mn(2+) serves as cofactor.

Its subcellular location is the cytoplasm. The enzyme catalyses 2 D-alanine + ATP = D-alanyl-D-alanine + ADP + phosphate + H(+). It functions in the pathway cell wall biogenesis; peptidoglycan biosynthesis. Functionally, cell wall formation. The chain is D-alanine--D-alanine ligase from Ectopseudomonas mendocina (strain ymp) (Pseudomonas mendocina).